A 433-amino-acid polypeptide reads, in one-letter code: ATP-dependent protease ATPase subunit HslU (433 aa).

Residues valine 18, 60–65 (GVGKTE), aspartate 246, glutamate 311, and arginine 383 contribute to the ATP site.

This sequence belongs to the ClpX chaperone family. HslU subfamily. In terms of assembly, a double ring-shaped homohexamer of HslV is capped on each side by a ring-shaped HslU homohexamer. The assembly of the HslU/HslV complex is dependent on binding of ATP.

The protein resides in the cytoplasm. Functionally, ATPase subunit of a proteasome-like degradation complex; this subunit has chaperone activity. The binding of ATP and its subsequent hydrolysis by HslU are essential for unfolding of protein substrates subsequently hydrolyzed by HslV. HslU recognizes the N-terminal part of its protein substrates and unfolds these before they are guided to HslV for hydrolysis. The sequence is that of ATP-dependent protease ATPase subunit HslU from Rhodopseudomonas palustris (strain ATCC BAA-98 / CGA009).